The chain runs to 156 residues: Small ribosomal subunit protein uS7 (156 aa).

Belongs to the universal ribosomal protein uS7 family. In terms of assembly, part of the 30S ribosomal subunit. Contacts proteins S9 and S11.

In terms of biological role, one of the primary rRNA binding proteins, it binds directly to 16S rRNA where it nucleates assembly of the head domain of the 30S subunit. Is located at the subunit interface close to the decoding center, probably blocks exit of the E-site tRNA. The protein is Small ribosomal subunit protein uS7 of Glaesserella parasuis serovar 5 (strain SH0165) (Haemophilus parasuis).